Consider the following 146-residue polypeptide: Hemoglobin subunit beta (146 aa).

At Val1 the chain carries N-acetylvaline. Positions 2 to 146 constitute a Globin domain; the sequence is HLTPDEKNAV…VANALAHKYH (145 aa). Position 12 is a phosphothreonine (Thr12). Ser44 bears the Phosphoserine mark. N6-acetyllysine is present on Lys59. His63 provides a ligand contact to heme b. The residue at position 82 (Lys82) is an N6-acetyllysine. Residue His92 participates in heme b binding. An S-nitrosocysteine modification is found at Cys93. The residue at position 144 (Lys144) is an N6-acetyllysine.

The protein belongs to the globin family. In terms of assembly, heterotetramer of two alpha chains and two beta chains. Red blood cells.

Its function is as follows. Involved in oxygen transport from the lung to the various peripheral tissues. The polypeptide is Hemoglobin subunit beta (HBB) (Piliocolobus badius (Western red colobus)).